Here is a 329-residue protein sequence, read N- to C-terminus: Delta(7)-sterol 5(6)-desaturase erg32 (329 aa).

A run of 2 helical transmembrane segments spans residues 67-87 (LFLITWIMGTLSYFLSASFAY) and 149-169 (FYLFFSIALFLLFSDFLIYWI). The Fatty acid hydroxylase domain maps to 156-281 (ALFLLFSDFL…FFTLFDRLCS (126 aa)). Positions 170 to 175 (HRALHH) match the Histidine box-1 motif. Positions 183–187 (HKLHH) match the Histidine box-2 motif. A helical transmembrane segment spans residues 210 to 230 (LPYHMFPFFFPLNKYVYLLLF). The Histidine box-3 signature appears at 257 to 262 (HHAAHH).

It belongs to the sterol desaturase family. Fe cation serves as cofactor.

The protein resides in the endoplasmic reticulum membrane. Its subcellular location is the golgi apparatus membrane. It carries out the reaction episterol + 2 Fe(II)-[cytochrome b5] + O2 + 2 H(+) = 5-dehydroepisterol + 2 Fe(III)-[cytochrome b5] + 2 H2O. The protein operates within steroid metabolism; ergosterol biosynthesis. Functionally, C-5 sterol desaturase; part of the third module of ergosterol biosynthesis pathway that includes by the late steps of the pathway. Erg31 and erg32 catalyze the introduction of a C-5 double bond in the B ring to produce 5-dehydroepisterol. The third module or late pathway involves the ergosterol synthesis itself through consecutive reactions that mainly occur in the endoplasmic reticulum (ER) membrane. Firstly, the squalene synthase erg9 catalyzes the condensation of 2 farnesyl pyrophosphate moieties to form squalene, which is the precursor of all steroids. Secondly, squalene is converted into lanosterol by the consecutive action of the squalene epoxidase erg1 and the lanosterol synthase erg7. The lanosterol 14-alpha-demethylase erg11/cyp1 catalyzes C14-demethylation of lanosterol to produce 4,4'-dimethyl cholesta-8,14,24-triene-3-beta-ol. In the next steps, a complex process involving various demethylation, reduction and desaturation reactions catalyzed by the C-14 reductase erg24 and the C-4 demethylation complex erg25-erg26-erg27 leads to the production of zymosterol. Erg28 likely functions in the C-4 demethylation complex reaction by tethering erg26 and Erg27 to the endoplasmic reticulum or to facilitate interaction between these proteins. Then, the sterol 24-C-methyltransferase erg6 catalyzes the methyl transfer from S-adenosyl-methionine to the C-24 of zymosterol to form fecosterol. The C-8 sterol isomerase erg2 catalyzes the reaction which results in unsaturation at C-7 in the B ring of sterols and thus converts fecosterol to episterol. The sterol-C5-desaturases erg31 and erg32 then catalyze the introduction of a C-5 double bond in the B ring to produce 5-dehydroepisterol. The C-22 sterol desaturase erg5 further converts 5-dehydroepisterol into ergosta-5,7,22,24(28)-tetraen-3beta-ol by forming the C-22(23) double bond in the sterol side chain. Finally, ergosta-5,7,22,24(28)-tetraen-3beta-ol is substrate of the C-24(28) sterol reductase erg4 to produce ergosterol. In the genus Schizosaccharomyces, a second route exists between lanosterol and fecosterol, via the methylation of lanosterol to eburicol by erg6, followed by C14-demethylation by erg11/cyp1 and C4-demethylation by the demethylation complex erg25-erg26-erg27. This is Delta(7)-sterol 5(6)-desaturase erg32 from Schizosaccharomyces pombe (strain 972 / ATCC 24843) (Fission yeast).